A 548-amino-acid polypeptide reads, in one-letter code: Chaperonin GroEL (548 aa).

ATP-binding positions include 30-33 (TLGP), lysine 51, 87-91 (DGTTT), glycine 415, 479-481 (NAA), and aspartate 495.

The protein belongs to the chaperonin (HSP60) family. Forms a cylinder of 14 subunits composed of two heptameric rings stacked back-to-back. Interacts with the co-chaperonin GroES.

The protein resides in the cytoplasm. It carries out the reaction ATP + H2O + a folded polypeptide = ADP + phosphate + an unfolded polypeptide.. Functionally, together with its co-chaperonin GroES, plays an essential role in assisting protein folding. The GroEL-GroES system forms a nano-cage that allows encapsulation of the non-native substrate proteins and provides a physical environment optimized to promote and accelerate protein folding. The protein is Chaperonin GroEL of Aliivibrio fischeri (strain MJ11) (Vibrio fischeri).